The following is an 84-amino-acid chain: Small ribosomal subunit protein uS17 (84 aa).

It belongs to the universal ribosomal protein uS17 family. As to quaternary structure, part of the 30S ribosomal subunit.

Functionally, one of the primary rRNA binding proteins, it binds specifically to the 5'-end of 16S ribosomal RNA. In Borrelia recurrentis (strain A1), this protein is Small ribosomal subunit protein uS17.